We begin with the raw amino-acid sequence, 519 residues long: T-complex protein 11-like protein 2 (519 aa).

Positions 1–30 (MPFNGEKQCVGEDQPSDSDSSRFSESMASL) are disordered. Residue Ser16 is modified to Phosphoserine. Residues 17–29 (DSDSSRFSESMAS) show a composition bias toward low complexity.

The protein belongs to the TCP11 family. As to quaternary structure, interacts with FMNL2; this interaction promotes muscle-derived satellite cell (MDSC) migration and differentiation.

It localises to the cytoplasm. It is found in the cytoskeleton. In terms of biological role, promotes the migration of muscle-derived satellite cells (MDSCs) during differentiation throught interaction with FMNL2 and therefore may participate in microfilament assembly. This chain is T-complex protein 11-like protein 2, found in Homo sapiens (Human).